A 340-amino-acid chain; its full sequence is Biotin synthase (340 aa).

The Radical SAM core domain occupies Ser-47–Lys-269. Residues Cys-62, Cys-66, and Cys-69 each contribute to the [4Fe-4S] cluster site. [2Fe-2S] cluster is bound by residues Cys-106, Cys-137, Cys-197, and Arg-273.

Belongs to the radical SAM superfamily. Biotin synthase family. Homodimer. Requires [4Fe-4S] cluster as cofactor. [2Fe-2S] cluster is required as a cofactor.

It catalyses the reaction (4R,5S)-dethiobiotin + (sulfur carrier)-SH + 2 reduced [2Fe-2S]-[ferredoxin] + 2 S-adenosyl-L-methionine = (sulfur carrier)-H + biotin + 2 5'-deoxyadenosine + 2 L-methionine + 2 oxidized [2Fe-2S]-[ferredoxin]. It participates in cofactor biosynthesis; biotin biosynthesis; biotin from 7,8-diaminononanoate: step 2/2. In terms of biological role, catalyzes the conversion of dethiobiotin (DTB) to biotin by the insertion of a sulfur atom into dethiobiotin via a radical-based mechanism. This is Biotin synthase from Caulobacter sp. (strain K31).